Here is a 429-residue protein sequence, read N- to C-terminus: Adenylosuccinate synthetase (429 aa).

Residues 12–18 and 40–42 each bind GTP; these read GDEGKGK and GHT. The active-site Proton acceptor is the D13. Mg(2+) is bound by residues D13 and G40. IMP-binding positions include 13–16, 38–41, T129, R143, Q224, T239, and R303; these read DEGK and NAGH. The Proton donor role is filled by H41. 299–305 is a substrate binding site; sequence VTTGRAR. GTP-binding positions include R305, 331-333, and 413-415; these read KLD and GVG.

This sequence belongs to the adenylosuccinate synthetase family. In terms of assembly, homodimer. The cofactor is Mg(2+).

The protein localises to the cytoplasm. The catalysed reaction is IMP + L-aspartate + GTP = N(6)-(1,2-dicarboxyethyl)-AMP + GDP + phosphate + 2 H(+). Its pathway is purine metabolism; AMP biosynthesis via de novo pathway; AMP from IMP: step 1/2. Functionally, plays an important role in the de novo pathway of purine nucleotide biosynthesis. Catalyzes the first committed step in the biosynthesis of AMP from IMP. This Rhodococcus opacus (strain B4) protein is Adenylosuccinate synthetase.